The primary structure comprises 333 residues: Olfactory receptor 9S13 (333 aa).

Residues 1-35 are Extracellular-facing; that stretch reads MATAVHRNGSLTPVSLRVFVLVGFGGGALTQALLF. A glycan (N-linked (GlcNAc...) asparagine) is linked at Asn8. A helical membrane pass occupies residues 36–56; that stretch reads AVFLVLYVVTVLGNLTMIVVI. Residues 57–72 lie on the Cytoplasmic side of the membrane; the sequence is TLDARLHSPMYFFLKN. The chain crosses the membrane as a helical span at residues 73–93; the sequence is LSFVDLCYSSAIAPNALANFL. At 94–106 the chain is on the extracellular side; it reads STSKVISFEACAT. Residues Cys104 and Cys196 are joined by a disulfide bond. The helical transmembrane segment at 107-127 threads the bilayer; sequence QFFFFSLLATTETFLLAVMAY. Residues 128 to 150 are Cytoplasmic-facing; that stretch reads DRFMAICSPLRYPVTMCPTTCTR. The chain crosses the membrane as a helical span at residues 151-171; that stretch reads LVLGTFCVGCLNSIVQTSLTF. Over 172 to 203 the chain is Extracellular; that stretch reads QLPFCSSNRIDHFYCDVPPLLQLACASTALNE. A helical membrane pass occupies residues 204–224; sequence LFLFGLCGFIIVSTTLAVLVS. At 225–251 the chain is on the cytoplasmic side; it reads YGYITVTILRMHSGSGRHKVFSTCGSH. The helical transmembrane segment at 252–272 threads the bilayer; that stretch reads LTAVSLFYGTLFVMYAQPGAL. The Extracellular portion of the chain corresponds to 273 to 278; sequence TSMEQG. Residues 279-299 traverse the membrane as a helical segment; sequence KVVSIFYTLVIPMLNPLIYSL. The Cytoplasmic portion of the chain corresponds to 300–333; it reads RNKDVKDALQRLGQRHSLVKAVRGCPAAGGNASV.

It belongs to the G-protein coupled receptor 1 family.

The protein resides in the cell membrane. Functionally, odorant receptor. This is Olfactory receptor 9S13 from Mus musculus (Mouse).